Here is a 260-residue protein sequence, read N- to C-terminus: Ditrans,polycis-undecaprenyl-diphosphate synthase ((2E,6E)-farnesyl-diphosphate specific) (260 aa).

Aspartate 20 is an active-site residue. Aspartate 20 contacts Mg(2+). Substrate is bound by residues 21-24, tryptophan 25, arginine 33, histidine 37, and 65-67; these read GNGR and SSE. Asparagine 68 functions as the Proton acceptor in the catalytic mechanism. Positions 69, 71, and 188 each coordinate substrate. Histidine 193 contacts Mg(2+). Position 194-196 (194-196) interacts with substrate; sequence RIS. Glutamate 207 lines the Mg(2+) pocket.

This sequence belongs to the UPP synthase family. In terms of assembly, homodimer. It depends on Mg(2+) as a cofactor.

The catalysed reaction is 8 isopentenyl diphosphate + (2E,6E)-farnesyl diphosphate = di-trans,octa-cis-undecaprenyl diphosphate + 8 diphosphate. Functionally, catalyzes the sequential condensation of isopentenyl diphosphate (IPP) with (2E,6E)-farnesyl diphosphate (E,E-FPP) to yield (2Z,6Z,10Z,14Z,18Z,22Z,26Z,30Z,34E,38E)-undecaprenyl diphosphate (di-trans,octa-cis-UPP). UPP is the precursor of glycosyl carrier lipid in the biosynthesis of bacterial cell wall polysaccharide components such as peptidoglycan and lipopolysaccharide. This chain is Ditrans,polycis-undecaprenyl-diphosphate synthase ((2E,6E)-farnesyl-diphosphate specific), found in Wigglesworthia glossinidia brevipalpis.